Consider the following 103-residue polypeptide: Signal recognition particle 19 kDa protein (103 aa).

It belongs to the SRP19 family. Part of the signal recognition particle protein translocation system, which is composed of SRP and FtsY. Archaeal SRP consists of a 7S RNA molecule of 300 nucleotides and two protein subunits: SRP54 and SRP19.

The protein resides in the cytoplasm. Functionally, involved in targeting and insertion of nascent membrane proteins into the cytoplasmic membrane. Binds directly to 7S RNA and mediates binding of the 54 kDa subunit of the SRP. The chain is Signal recognition particle 19 kDa protein from Hyperthermus butylicus (strain DSM 5456 / JCM 9403 / PLM1-5).